The sequence spans 54 residues: Small, acid-soluble spore protein gamma-type (54 aa).

Residues 1-54 are disordered; sequence MAKKNRNKQQQEMQQQQQQHQAEFANEFAEGSSAEQARQQQQKAAGKRQKKNQQ. Low complexity-rich tracts occupy residues 10–21 and 29–44; these read QQEMQQQQQQHQ and AEGS…QQKA. The span at 45–54 shows a compositional bias: basic residues; sequence AGKRQKKNQQ.

The protein belongs to the gamma-type SASP family.

SASP are proteins degraded in the first minutes of spore germination and provide amino acids for both new protein synthesis and metabolism. These proteins may be involved in dormant spore's high resistance to UV light. This chain is Small, acid-soluble spore protein gamma-type (sspA), found in Alkalihalophilus pseudofirmus (strain ATCC BAA-2126 / JCM 17055 / OF4) (Bacillus pseudofirmus).